A 316-amino-acid chain; its full sequence is HPr kinase/phosphorylase (316 aa).

Catalysis depends on residues histidine 143 and lysine 164. 158–165 (GEAGSGKS) provides a ligand contact to ATP. A Mg(2+)-binding site is contributed by serine 165. The active-site Proton acceptor; for phosphorylation activity. Proton donor; for dephosphorylation activity is aspartate 182. The tract at residues 206-215 (LEVRGLGVLN) is important for the catalytic mechanism of both phosphorylation and dephosphorylation. Glutamate 207 serves as a coordination point for Mg(2+). Arginine 251 is an active-site residue. The important for the catalytic mechanism of dephosphorylation stretch occupies residues 272-277 (PVMPGR).

This sequence belongs to the HPrK/P family. As to quaternary structure, homohexamer. Mg(2+) is required as a cofactor.

It carries out the reaction [HPr protein]-L-serine + ATP = [HPr protein]-O-phospho-L-serine + ADP + H(+). It catalyses the reaction [HPr protein]-O-phospho-L-serine + phosphate + H(+) = [HPr protein]-L-serine + diphosphate. Its function is as follows. Catalyzes the ATP- as well as the pyrophosphate-dependent phosphorylation of a specific serine residue in HPr, a phosphocarrier protein of the phosphoenolpyruvate-dependent sugar phosphotransferase system (PTS). HprK/P also catalyzes the pyrophosphate-producing, inorganic phosphate-dependent dephosphorylation (phosphorolysis) of seryl-phosphorylated HPr (P-Ser-HPr). The sequence is that of HPr kinase/phosphorylase from Stenotrophomonas maltophilia (strain R551-3).